A 390-amino-acid chain; its full sequence is GTPase Obg/CgtA (390 aa).

The Obg domain maps to 1 to 159 (MKFVDEAVIK…RDIRLELLLL (159 aa)). The OBG-type G domain occupies 160–333 (ADVGMLGMPN…LCMKLAEFMD (174 aa)). GTP-binding positions include 166–173 (GMPNAGKS), 191–195 (FTTLV), 213–216 (DIPG), 283–286 (NKVD), and 314–316 (SAA). Mg(2+) contacts are provided by Ser-173 and Thr-193.

This sequence belongs to the TRAFAC class OBG-HflX-like GTPase superfamily. OBG GTPase family. Monomer. Interacts with SpoT (AC Q9KNM2) in a yeast 2-hybrid assay. Mg(2+) is required as a cofactor.

It localises to the cytoplasm. Depletion experiments lead to gene down regulation and a dramatic increase in ppGpp levels, like those seen in the stringent response. There is no change in cell morphology in depletion experiments, but cells are very sensitive to the DNA-damaging agent hydroxyurea and are very elongated. Overexpression reduces growth and leads to elongated cells. Overexpression of proteins with C-terminal deletions of 29 or 62 amino acids showed fewer elongated cells. In terms of biological role, an essential GTPase which binds GTP, GDP and possibly (p)ppGpp with moderate affinity, with high nucleotide exchange rates and a fairly low GTP hydrolysis rate. It may play a role in control of the cell cycle, stress response, ribosome biogenesis and in those bacteria that undergo differentiation, in morphogenesis control. GTPase activity is stimulated by 50S ribosomal subunits. This Vibrio cholerae serotype O1 (strain ATCC 39315 / El Tor Inaba N16961) protein is GTPase Obg/CgtA.